The sequence spans 447 residues: Phosphoglucosamine mutase (447 aa).

Ser-102 (phosphoserine intermediate) is an active-site residue. Residues Ser-102, Asp-241, Asp-243, and Asp-245 each coordinate Mg(2+). At Ser-102 the chain carries Phosphoserine.

The protein belongs to the phosphohexose mutase family. It depends on Mg(2+) as a cofactor. Post-translationally, activated by phosphorylation.

It carries out the reaction alpha-D-glucosamine 1-phosphate = D-glucosamine 6-phosphate. Catalyzes the conversion of glucosamine-6-phosphate to glucosamine-1-phosphate. The sequence is that of Phosphoglucosamine mutase from Pseudomonas savastanoi pv. phaseolicola (strain 1448A / Race 6) (Pseudomonas syringae pv. phaseolicola (strain 1448A / Race 6)).